Reading from the N-terminus, the 721-residue chain is Polyribonucleotide nucleotidyltransferase (721 aa).

Aspartate 495 and aspartate 501 together coordinate Mg(2+). The KH domain occupies proline 562–isoleucine 621. Residues glycine 631–arginine 699 form the S1 motif domain. Residues serine 702–asparagine 721 form a disordered region. Positions glutamate 711–asparagine 721 are enriched in pro residues.

This sequence belongs to the polyribonucleotide nucleotidyltransferase family. Mg(2+) serves as cofactor.

It localises to the cytoplasm. The enzyme catalyses RNA(n+1) + phosphate = RNA(n) + a ribonucleoside 5'-diphosphate. Its function is as follows. Involved in mRNA degradation. Catalyzes the phosphorolysis of single-stranded polyribonucleotides processively in the 3'- to 5'-direction. The protein is Polyribonucleotide nucleotidyltransferase of Prochlorococcus marinus (strain MIT 9312).